The chain runs to 338 residues: Peptidoglycan deacetylase-like protein FGM2 (338 aa).

Asp49, His124, and His128 together coordinate Zn(2+). In terms of domain architecture, NodB homology spans 65-257 (LSDYSAGIFA…VTNSHGFVSS (193 aa)).

The protein belongs to the polysaccharide deacetylase family.

Its function is as follows. Peptidoglycan deacetylase-like protein; part of the Fg3_54/C64 gene cluster that mediates the biosynthesis of the octapeptide fusaoctaxin A, a virulence factor that is required for cell-to-cell invasiveness of plant host. The 2 nonribosomal peptide synthetases NRPS9 and NRPS5 form an assembly line which likely utilizes GABA as a starter unit (loaded on the unique module M1 of NRPS9) and sequentially incorporates seven extender units composed of the residues L-Ala, L-allo-Ile, L-Ser, L-Val, L-Ser, L-Leu and L-Leu, respectively. During the process, each of the residues that are tethered on modules M3-M7 of NRPS5 containing an E domain can undergo an epimerization reaction to produce a D-configuration before the transpeptidation reaction occurs. The elongation of the peptidyl chain might be terminated by module M8-mediated L-Leu incorporation, followed by R domain-catalyzed 4 electron reduction to release the resulting octapeptide from the assembly line as an alcohol. Fusaoctaxin A is cleaved by the cluster specific ABC transporter FGM5 to the pentapeptide fusapentaxin A and the tripeptide fusatrixin A. The other enzymes from the cluster, FGM1, FGM2, FGM3 and FGM9 seem not to be involved in the biosynthesis of fusaoctaxin A and their functions have still to be determined. The polypeptide is Peptidoglycan deacetylase-like protein FGM2 (Gibberella zeae (strain ATCC MYA-4620 / CBS 123657 / FGSC 9075 / NRRL 31084 / PH-1) (Wheat head blight fungus)).